The sequence spans 830 residues: V-type proton ATPase 116 kDa subunit a 3 (830 aa).

At 1–385 the chain is on the cytoplasmic side; sequence MGSMFRSEEV…DAYGVGRYQE (385 aa). Positions 139–158 are disordered; sequence QLAAAHTDGASERTPLLQAP. Residues 386–404 traverse the membrane as a helical segment; it reads VNPAPYTIITFPFLFAVMF. Residues 405–406 lie on the Vacuolar side of the membrane; the sequence is GD. A helical transmembrane segment spans residues 407–423; sequence VGHGLLMFLFALAMVLA. Residues 424–438 are Cytoplasmic-facing; sequence ENRPAVKAAQNEIWQ. A helical membrane pass occupies residues 439-468; the sequence is TFFRGRYLLLLMGLFSIYTGFIYNECFSRA. Residues 469–532 are Vacuolar-facing; that stretch reads TSIFPSGWSV…AANHLSFLNS (64 aa). A helical membrane pass occupies residues 533-552; it reads FKMKMSVILGVVHMAFGVVL. Over 553–570 the chain is Cytoplasmic; it reads GVFNHVHFGQRHRLLLET. A helical transmembrane segment spans residues 571-591; that stretch reads LPELTFLLGLFGYLVFLVIYK. At 592–635 the chain is on the vacuolar side; sequence WLCVWAARAASAPSILIHFINMFLFSHSPSNRLLYPRQEVVQAT. The helical transmembrane segment at 636–655 threads the bilayer; that stretch reads LVVLALAMVPILLLGTPLHL. Topologically, residues 656–720 are cytoplasmic; that stretch reads LHRHRRRLRR…EVLMHQAIHT (65 aa). A disordered region spans residues 681-701; the sequence is LPDASVNGWSSDEEKAGGLDD. Residues 721–745 form a helical membrane-spanning segment; it reads IEFCLGCVSNTASYLRLWALSLAHA. At 746–766 the chain is on the vacuolar side; sequence QLSEVLWAMVMRIGLGLGREV. The chain crosses the membrane as a helical span at residues 767-807; the sequence is GVAAVVLVPIFAAFAVMTVAILLVMEGLSAFLHALRLHWVE. The Cytoplasmic portion of the chain corresponds to 808 to 830; that stretch reads FQNKFYSGTGYKLSPFTFAATDD.

The protein belongs to the V-ATPase 116 kDa subunit family. In terms of assembly, V-ATPase is a heteromultimeric enzyme made up of two complexes: the ATP-hydrolytic V1 complex and the proton translocation V0 complex. The V1 complex consists of three catalytic AB heterodimers that form a heterohexamer, three peripheral stalks each consisting of EG heterodimers, one central rotor including subunits D and F, and the regulatory subunits C and H. The proton translocation complex V0 consists of the proton transport subunit a, a ring of proteolipid subunits c9c'', rotary subunit d, subunits e and f, and the accessory subunits ATP6AP1/Ac45 and ATP6AP2/PRR. In terms of tissue distribution, isoform long is highly expressed in osteoclastomas. Isoform short is highly expressed in thymus.

It localises to the membrane. Its function is as follows. Subunit of the V0 complex of vacuolar(H+)-ATPase (V-ATPase), a multisubunit enzyme composed of a peripheral complex (V1) that hydrolyzes ATP and a membrane integral complex (V0) that translocates protons. V-ATPase is responsible for acidifying and maintaining the pH of intracellular compartments and in some cell types, is targeted to the plasma membrane, where it is responsible for acidifying the extracellular environment. Seems to be directly involved in T-cell activation. The protein is V-type proton ATPase 116 kDa subunit a 3 (TCIRG1) of Homo sapiens (Human).